Consider the following 239-residue polypeptide: ATP-dependent dethiobiotin synthetase BioD (239 aa).

Residue 13–18 (EIGKTV) coordinates ATP. A Mg(2+)-binding site is contributed by T17. K38 is an active-site residue. T42 is a substrate binding site. Residues K59 and E111 each coordinate Mg(2+). Residues 111–114 (EGAG), 175–176 (NQ), and 204–206 (PSL) contribute to the ATP site.

This sequence belongs to the dethiobiotin synthetase family. As to quaternary structure, homodimer. Mg(2+) is required as a cofactor.

Its subcellular location is the cytoplasm. The enzyme catalyses (7R,8S)-7,8-diammoniononanoate + CO2 + ATP = (4R,5S)-dethiobiotin + ADP + phosphate + 3 H(+). Its pathway is cofactor biosynthesis; biotin biosynthesis; biotin from 7,8-diaminononanoate: step 1/2. Catalyzes a mechanistically unusual reaction, the ATP-dependent insertion of CO2 between the N7 and N8 nitrogen atoms of 7,8-diaminopelargonic acid (DAPA, also called 7,8-diammoniononanoate) to form a ureido ring. The polypeptide is ATP-dependent dethiobiotin synthetase BioD (Geobacillus sp. (strain WCH70)).